The primary structure comprises 376 residues: N-acetyldiaminopimelate deacetylase (376 aa).

Residue Asp69 is part of the active site. Residue Glu128 is the Proton acceptor of the active site.

This sequence belongs to the peptidase M20A family. N-acetyldiaminopimelate deacetylase subfamily.

The catalysed reaction is N-acetyl-(2S,6S)-2,6-diaminopimelate + H2O = (2S,6S)-2,6-diaminopimelate + acetate. Its pathway is amino-acid biosynthesis; L-lysine biosynthesis via DAP pathway; LL-2,6-diaminopimelate from (S)-tetrahydrodipicolinate (acetylase route): step 3/3. Functionally, catalyzes the conversion of N-acetyl-diaminopimelate to diaminopimelate and acetate. The chain is N-acetyldiaminopimelate deacetylase from Streptococcus pneumoniae serotype 4 (strain ATCC BAA-334 / TIGR4).